The chain runs to 28 residues: 3,4-dihydroxybenzoate decarboxylase (28 aa).

As to quaternary structure, homopentamer.

It carries out the reaction 3,4-dihydroxybenzoate + H(+) = catechol + CO2. With respect to regulation, inhibited by oxygen. Completely inhibited by HgCl(2). Partially inhibited by ZnSO(4), 2,3,4-trihydroxybeonzoate and 3,4,5-trihydroxybeonzoate. Unaffected by KCl, MnCl(2) or EDTA. Not stimulated by thiamine phosphate, pyridoxal 5'-phosphate or biotin. Not inhibited by hydroxylamine, NaBH(4) or avidin. In terms of biological role, reversibly catalyzes the decarboxylation of 3,4-dihydroxybenzoate to catechol. Inactive toward 4-hydroxybenzoate and other benzoate derivatives. This chain is 3,4-dihydroxybenzoate decarboxylase, found in Sedimentibacter hydroxybenzoicus (Clostridium hydroxybenzoicum).